The sequence spans 115 residues: Succinate dehydrogenase hydrophobic membrane anchor subunit (115 aa).

Residues 1–15 (MVSNASALGRNGVHD) are Cytoplasmic-facing. Residues 16–36 (FILVRATAIVLTLYIIYMVGF) form a helical membrane-spanning segment. Residues 37–58 (FATSGELTYEVWIGFFASAFTK) lie on the Periplasmic side of the membrane. A helical membrane pass occupies residues 59-80 (VFTLLALFSILIHAWIGMWQVL). His71 serves as a coordination point for heme. At 81 to 90 (TDYVKPLALR) the chain is on the cytoplasmic side. An a ubiquinone-binding site is contributed by Tyr83. A helical membrane pass occupies residues 91-115 (LMLQLVIVVALVVYVIYGFVVVWGV).

In terms of assembly, part of an enzyme complex containing four subunits: a flavoprotein, an iron-sulfur protein, plus two membrane-anchoring proteins, SdhC and SdhD. The complex can form homotrimers. Requires heme as cofactor.

The protein resides in the cell inner membrane. Its pathway is carbohydrate metabolism; tricarboxylic acid cycle. Its function is as follows. Membrane-anchoring subunit of succinate dehydrogenase (SDH). This is Succinate dehydrogenase hydrophobic membrane anchor subunit (sdhD) from Escherichia coli O6:H1 (strain CFT073 / ATCC 700928 / UPEC).